Here is a 263-residue protein sequence, read N- to C-terminus: Pro-opiomelanocortin (263 aa).

Positions 1-25 (MLHPVWGCVVAVMGVLWFYSSGVQS) are cleaved as a signal peptide. Q26 carries the pyrrolidone carboxylic acid modification. Intrachain disulfides connect C27–C49 and C33–C45. A disordered region spans residues 114 to 142 (SQPRDEVERESEEEEGLQQHRRDDKRSYS). Over residues 130–142 (LQQHRRDDKRSYS) the composition is skewed to basic and acidic residues. A Valine amide modification is found at V152.

It belongs to the POMC family. Post-translationally, specific enzymatic cleavages at paired basic residues yield the different active peptides.

The protein resides in the secreted. In terms of biological role, stimulates the adrenal glands to release cortisol. Anorexigenic peptide. Increases the pigmentation of skin by increasing melanin production in melanocytes. Functionally, increases the pigmentation of skin by increasing melanin production in melanocytes. Its function is as follows. Endogenous orexigenic opiate. In terms of biological role, endogenous opiate. This Acipenser transmontanus (White sturgeon) protein is Pro-opiomelanocortin (pomc).